Consider the following 423-residue polypeptide: Histidine--tRNA ligase (423 aa).

Belongs to the class-II aminoacyl-tRNA synthetase family. In terms of assembly, homodimer.

Its subcellular location is the cytoplasm. The catalysed reaction is tRNA(His) + L-histidine + ATP = L-histidyl-tRNA(His) + AMP + diphosphate + H(+). The chain is Histidine--tRNA ligase from Actinobacillus pleuropneumoniae serotype 7 (strain AP76).